A 340-amino-acid polypeptide reads, in one-letter code: GTP 3',8-cyclase (340 aa).

The Radical SAM core domain maps to 20-246; that stretch reads RFERQYVYLR…PKALSDGPAK (227 aa). Position 29 (Arg-29) interacts with GTP. 2 residues coordinate [4Fe-4S] cluster: Cys-36 and Cys-40. S-adenosyl-L-methionine is bound at residue Tyr-42. Cys-43 serves as a coordination point for [4Fe-4S] cluster. A GTP-binding site is contributed by Arg-79. S-adenosyl-L-methionine is bound at residue Gly-83. Thr-110 serves as a coordination point for GTP. Ser-134 lines the S-adenosyl-L-methionine pocket. Lys-171 is a binding site for GTP. Met-205 contacts S-adenosyl-L-methionine. Residues Cys-268 and Cys-271 each coordinate [4Fe-4S] cluster. 273–275 is a GTP binding site; sequence RLR. Cys-285 is a [4Fe-4S] cluster binding site.

It belongs to the radical SAM superfamily. MoaA family. Monomer and homodimer. [4Fe-4S] cluster is required as a cofactor.

It catalyses the reaction GTP + AH2 + S-adenosyl-L-methionine = (8S)-3',8-cyclo-7,8-dihydroguanosine 5'-triphosphate + 5'-deoxyadenosine + L-methionine + A + H(+). It functions in the pathway cofactor biosynthesis; molybdopterin biosynthesis. In terms of biological role, catalyzes the cyclization of GTP to (8S)-3',8-cyclo-7,8-dihydroguanosine 5'-triphosphate. This is GTP 3',8-cyclase from Actinobacillus pleuropneumoniae serotype 7 (strain AP76).